The sequence spans 124 residues: Small ribosomal subunit protein uS13 (124 aa).

Residues 89–124 (GRRHRQGLPVRGQRTKTNARTRKGPKRTVAGKKKAK) are disordered. Positions 101 to 124 (QRTKTNARTRKGPKRTVAGKKKAK) are enriched in basic residues.

This sequence belongs to the universal ribosomal protein uS13 family. Part of the 30S ribosomal subunit. Forms a loose heterodimer with protein S19. Forms two bridges to the 50S subunit in the 70S ribosome.

Located at the top of the head of the 30S subunit, it contacts several helices of the 16S rRNA. In the 70S ribosome it contacts the 23S rRNA (bridge B1a) and protein L5 of the 50S subunit (bridge B1b), connecting the 2 subunits; these bridges are implicated in subunit movement. Contacts the tRNAs in the A and P-sites. The sequence is that of Small ribosomal subunit protein uS13 from Nocardioides sp. (strain ATCC BAA-499 / JS614).